We begin with the raw amino-acid sequence, 417 residues long: Serine hydroxymethyltransferase (417 aa).

(6S)-5,6,7,8-tetrahydrofolate-binding positions include Leu121 and 125–127 (GHL). Lys229 carries the post-translational modification N6-(pyridoxal phosphate)lysine. 355-357 (SPF) is a binding site for (6S)-5,6,7,8-tetrahydrofolate.

Belongs to the SHMT family. In terms of assembly, homodimer. Requires pyridoxal 5'-phosphate as cofactor.

It localises to the cytoplasm. The catalysed reaction is (6R)-5,10-methylene-5,6,7,8-tetrahydrofolate + glycine + H2O = (6S)-5,6,7,8-tetrahydrofolate + L-serine. The protein operates within one-carbon metabolism; tetrahydrofolate interconversion. It functions in the pathway amino-acid biosynthesis; glycine biosynthesis; glycine from L-serine: step 1/1. Its function is as follows. Catalyzes the reversible interconversion of serine and glycine with tetrahydrofolate (THF) serving as the one-carbon carrier. This reaction serves as the major source of one-carbon groups required for the biosynthesis of purines, thymidylate, methionine, and other important biomolecules. Also exhibits THF-independent aldolase activity toward beta-hydroxyamino acids, producing glycine and aldehydes, via a retro-aldol mechanism. This is Serine hydroxymethyltransferase from Klebsiella pneumoniae subsp. pneumoniae (strain ATCC 700721 / MGH 78578).